The sequence spans 505 residues: Trans-cinnamate 4-monooxygenase (505 aa).

A helical membrane pass occupies residues 3-23 (LLLLEKTLLGSFVAILVAILV). (E)-cinnamate is bound by residues 213–218 (RSRLAQ) and A306. C447 contributes to the heme binding site.

Belongs to the cytochrome P450 family. It depends on heme as a cofactor.

Its subcellular location is the membrane. It catalyses the reaction (E)-cinnamate + reduced [NADPH--hemoprotein reductase] + O2 = (E)-4-coumarate + oxidized [NADPH--hemoprotein reductase] + H2O + H(+). It functions in the pathway phenylpropanoid metabolism; trans-4-coumarate biosynthesis; trans-4-coumarate from trans-cinnamate: step 1/1. Catalyzes the first oxidative step of the phenylpropanoid pathway in higher plants by transforming trans-cinnamate into p-coumarate. The compounds formed by this pathway are essential components for lignification, pollination, and defense against ultraviolet light, predators and pathogens. The protein is Trans-cinnamate 4-monooxygenase (CYP73A13) of Populus tremuloides (Quaking aspen).